Consider the following 378-residue polypeptide: Probable endopolygalacturonase AFUB_016610 (378 aa).

Positions 1–19 are cleaved as a signal peptide; sequence MLKLMGSLVLLASAAEVIA. Positions 20 to 35 are excised as a propeptide; sequence SPAAEPVAPSTTLEKR. The cysteines at positions 38 and 56 are disulfide-linked. 3 PbH1 repeats span residues 147–169, 170–200, and 201–222; these read TSSS…SING, CDGL…DIGS, and SSNI…AVNS. Asp-215 acts as the Proton donor in catalysis. Cys-217 and Cys-233 are oxidised to a cystine. His-237 is a catalytic residue. PbH1 repeat units lie at residues 252 to 273 and 281 to 303; these read VENV…RIKA and IKGV…LIEQ. Asn-254 carries an N-linked (GlcNAc...) asparagine glycan. N-linked (GlcNAc...) asparagine glycosylation is present at Asn-327. A disulfide bridge links Cys-345 with Cys-350. Asn-352 carries an N-linked (GlcNAc...) asparagine glycan. Cys-369 and Cys-378 are joined by a disulfide.

Belongs to the glycosyl hydrolase 28 family.

It is found in the secreted. The catalysed reaction is (1,4-alpha-D-galacturonosyl)n+m + H2O = (1,4-alpha-D-galacturonosyl)n + (1,4-alpha-D-galacturonosyl)m.. Involved in maceration and soft-rotting of plant tissue. Hydrolyzes the 1,4-alpha glycosidic bonds of de-esterified pectate in the smooth region of the plant cell wall. The polypeptide is Probable endopolygalacturonase AFUB_016610 (Aspergillus fumigatus (strain CBS 144.89 / FGSC A1163 / CEA10) (Neosartorya fumigata)).